We begin with the raw amino-acid sequence, 319 residues long: L-lactate dehydrogenase 2 (319 aa).

NAD(+) is bound by residues V17, D38, K43, Y69, and G83–A84. Q86 and R92 together coordinate substrate. NAD(+)-binding positions include S105, A122 to N124, and S147. Residue N124–D127 participates in substrate binding. D152 to R155 contacts substrate. Beta-D-fructose 1,6-bisphosphate is bound by residues R157 and H172. H179 (proton acceptor) is an active-site residue. Y224 bears the Phosphotyrosine mark. Residue T233 coordinates substrate.

Belongs to the LDH/MDH superfamily. LDH family. Homotetramer.

Its subcellular location is the cytoplasm. It carries out the reaction (S)-lactate + NAD(+) = pyruvate + NADH + H(+). Its pathway is fermentation; pyruvate fermentation to lactate; (S)-lactate from pyruvate: step 1/1. Allosterically activated by fructose 1,6-bisphosphate (FBP). Catalyzes the conversion of lactate to pyruvate. This is L-lactate dehydrogenase 2 from Peribacillus psychrosaccharolyticus (Bacillus psychrosaccharolyticus).